Here is a 270-residue protein sequence, read N- to C-terminus: Protein-ADP-ribose hydrolase (270 aa).

Residues 73–267 enclose the Macro domain; that stretch reads VSVKDCQKTN…LYDTYLQKEN (195 aa). Residues Asp92, Ile93, and Asn106 each coordinate ADP-D-ribose. Residues Cys112, His117, and Cys119 each coordinate Zn(2+). The ADP-D-ribose site is built by Cys119, Ile120, Asp121, Ser212, Thr213, Gly214, Glu215, and Phe216.

The protein belongs to the MacroD-type family. Zn-Macro subfamily. Requires Zn(2+) as cofactor.

The enzyme catalyses 4-O-(ADP-D-ribosyl)-L-aspartyl-[protein] + H2O = L-aspartyl-[protein] + ADP-D-ribose + H(+). In terms of biological role, ADP-ribosylhydrolase that specifically reverses the SirTM-mediated mono-ADP-ribosylation at an asparatate residue of GcvH-L, by releasing ADP-ribose from the target protein. May play a role in the regulation of the response to host-induced oxidative stress. This Streptococcus pyogenes serotype M1 protein is Protein-ADP-ribose hydrolase.